An 800-amino-acid chain; its full sequence is Phenylalanine--tRNA ligase beta subunit (800 aa).

The tRNA-binding domain maps to 39-148 (TAALAPFVVG…ADTPVGVPLV (110 aa)). A B5 domain is found at 402 to 478 (VWRRTIALRP…RLHGFDLVPA (77 aa)). Residues Asp-456, Asp-462, Glu-465, and Glu-466 each coordinate Mg(2+). The 94-residue stretch at 706–799 (SPFQPVARDF…VTKLTGGSLR (94 aa)) folds into the FDX-ACB domain.

The protein belongs to the phenylalanyl-tRNA synthetase beta subunit family. Type 1 subfamily. Tetramer of two alpha and two beta subunits. The cofactor is Mg(2+).

The protein resides in the cytoplasm. The enzyme catalyses tRNA(Phe) + L-phenylalanine + ATP = L-phenylalanyl-tRNA(Phe) + AMP + diphosphate + H(+). The polypeptide is Phenylalanine--tRNA ligase beta subunit (Rhodospirillum rubrum (strain ATCC 11170 / ATH 1.1.1 / DSM 467 / LMG 4362 / NCIMB 8255 / S1)).